Reading from the N-terminus, the 508-residue chain is ATP synthase subunit alpha, chloroplastic (508 aa).

An ATP-binding site is contributed by 170-177; the sequence is GDRQTGKT.

Belongs to the ATPase alpha/beta chains family. In terms of assembly, F-type ATPases have 2 components, CF(1) - the catalytic core - and CF(0) - the membrane proton channel. CF(1) has five subunits: alpha(3), beta(3), gamma(1), delta(1), epsilon(1). CF(0) has four main subunits: a, b, b' and c.

Its subcellular location is the plastid. The protein localises to the chloroplast thylakoid membrane. The catalysed reaction is ATP + H2O + 4 H(+)(in) = ADP + phosphate + 5 H(+)(out). Its function is as follows. Produces ATP from ADP in the presence of a proton gradient across the membrane. The alpha chain is a regulatory subunit. The protein is ATP synthase subunit alpha, chloroplastic of Helianthus annuus (Common sunflower).